The following is a 270-amino-acid chain: Acyl-[acyl-carrier-protein]--UDP-N-acetylglucosamine O-acyltransferase (270 aa).

It belongs to the transferase hexapeptide repeat family. LpxA subfamily. As to quaternary structure, homotrimer.

It localises to the cytoplasm. It catalyses the reaction a (3R)-hydroxyacyl-[ACP] + UDP-N-acetyl-alpha-D-glucosamine = a UDP-3-O-[(3R)-3-hydroxyacyl]-N-acetyl-alpha-D-glucosamine + holo-[ACP]. Its pathway is glycolipid biosynthesis; lipid IV(A) biosynthesis; lipid IV(A) from (3R)-3-hydroxytetradecanoyl-[acyl-carrier-protein] and UDP-N-acetyl-alpha-D-glucosamine: step 1/6. Its function is as follows. Involved in the biosynthesis of lipid A, a phosphorylated glycolipid that anchors the lipopolysaccharide to the outer membrane of the cell. In Helicobacter pylori (strain P12), this protein is Acyl-[acyl-carrier-protein]--UDP-N-acetylglucosamine O-acyltransferase.